Consider the following 403-residue polypeptide: Rhomboid-like protein 15 (403 aa).

The next 5 helical transmembrane spans lie at 22–42, 70–90, 103–123, 141–161, and 176–196; these read IPFLTSSVVVVCGVIYLICLL, AIIFHGSLLHVLFNMMALVPM, LLYLTVLLATTNAVLHLLIAS, AIGFSGILFSMIVIETSLSGV, and LYPWILLIVFQLLMTNVSLLG. The Nucleophile role is filled by Ser145. Residue His197 is the Charge relay system of the active site. The chain crosses the membrane as a helical span at residues 198–218; it reads LCGILSGFSYSYGLFNFLMPG. Residues 282-316 form a disordered region; sequence EASNQSSEDSRFPGRGRTLSTARDPTAPAGETDPN. Residues 361–401 form the UBA domain; that stretch reads AASEEQIQKLVAMGFDRTQVEVALAAADDDLTVAVEILMSQ.

This sequence belongs to the peptidase S54 family.

It localises to the membrane. Probable rhomboid-type serine protease that catalyzes intramembrane proteolysis. May function in senescence. This Arabidopsis thaliana (Mouse-ear cress) protein is Rhomboid-like protein 15.